The chain runs to 172 residues: Adenine phosphoribosyltransferase (172 aa).

The protein belongs to the purine/pyrimidine phosphoribosyltransferase family. As to quaternary structure, homodimer.

It is found in the cytoplasm. It catalyses the reaction AMP + diphosphate = 5-phospho-alpha-D-ribose 1-diphosphate + adenine. It participates in purine metabolism; AMP biosynthesis via salvage pathway; AMP from adenine: step 1/1. Functionally, catalyzes a salvage reaction resulting in the formation of AMP, that is energically less costly than de novo synthesis. In Prochlorococcus marinus (strain MIT 9211), this protein is Adenine phosphoribosyltransferase.